We begin with the raw amino-acid sequence, 237 residues long: uncharacterized protein (237 aa).

An N-terminal signal peptide occupies residues 1–28 (MVFSFSTFNRLVTFTVMAAIVSVRPLTA).

This is an uncharacterized protein from Sinorhizobium fredii (strain NBRC 101917 / NGR234).